The following is a 441-amino-acid chain: Amino-acid acetyltransferase (441 aa).

An N-acetyltransferase domain is found at 295 to 434; the sequence is EQIRRANIND…QALYNYQRRS (140 aa).

This sequence belongs to the acetyltransferase family. ArgA subfamily. As to quaternary structure, homohexamer.

It localises to the cytoplasm. The enzyme catalyses L-glutamate + acetyl-CoA = N-acetyl-L-glutamate + CoA + H(+). Its pathway is amino-acid biosynthesis; L-arginine biosynthesis; N(2)-acetyl-L-ornithine from L-glutamate: step 1/4. This Edwardsiella ictaluri (strain 93-146) protein is Amino-acid acetyltransferase.